The chain runs to 227 residues: 7-cyano-7-deazaguanine synthase (227 aa).

Position 8–18 (8–18 (VSGGADSATVL)) interacts with ATP. Zn(2+) contacts are provided by Cys192, Cys202, Cys205, and Cys208.

This sequence belongs to the QueC family. Zn(2+) serves as cofactor.

It catalyses the reaction 7-carboxy-7-deazaguanine + NH4(+) + ATP = 7-cyano-7-deazaguanine + ADP + phosphate + H2O + H(+). It participates in purine metabolism; 7-cyano-7-deazaguanine biosynthesis. Catalyzes the ATP-dependent conversion of 7-carboxy-7-deazaguanine (CDG) to 7-cyano-7-deazaguanine (preQ(0)). The protein is 7-cyano-7-deazaguanine synthase of Rickettsia canadensis (strain McKiel).